Reading from the N-terminus, the 748-residue chain is Catalase-peroxidase (748 aa).

The segment at residues tryptophan 96–tyrosine 229 is a cross-link (tryptophyl-tyrosyl-methioninium (Trp-Tyr) (with M-255)). The Proton acceptor role is filled by histidine 97. Residues tyrosine 229–methionine 255 constitute a cross-link (tryptophyl-tyrosyl-methioninium (Tyr-Met) (with W-96)). Residue histidine 270 coordinates heme b.

The protein belongs to the peroxidase family. Peroxidase/catalase subfamily. In terms of assembly, homodimer or homotetramer. Heme b is required as a cofactor. Post-translationally, formation of the three residue Trp-Tyr-Met cross-link is important for the catalase, but not the peroxidase activity of the enzyme.

The protein localises to the cytoplasm. It carries out the reaction H2O2 + AH2 = A + 2 H2O. The catalysed reaction is 2 H2O2 = O2 + 2 H2O. Bifunctional enzyme with both catalase and broad-spectrum peroxidase activity. Plays a crucial role in oxidative stress response during infection. Acts as an antigen and elicits antibody response in P.marneffei-infected AIDS patients, healthy people working in mycological laboratory, and healthy people in an endemic area. This Talaromyces marneffei (Penicillium marneffei) protein is Catalase-peroxidase.